Reading from the N-terminus, the 353-residue chain is E3 ubiquitin-protein ligase Os03g0188200 (353 aa).

Residues 48–68 form a helical membrane-spanning segment; the sequence is VVVLVALITAFVLLTVFSVLI. An RING-type; atypical zinc finger spans residues 133–175; the sequence is CAVCLAEFADSDELRVLPACCHVFHPDCIDPWLAAAVTCPLCR. Composition is skewed to basic and acidic residues over residues 308-318 and 340-353; these read ADWDAGEEHGG and GSKE…LNRV. The segment at 308–353 is disordered; the sequence is ADWDAGEEHGGSKRVHPVAGAQDETPSGSGSDGSKENSDSDALNRV.

It is found in the membrane. It catalyses the reaction S-ubiquitinyl-[E2 ubiquitin-conjugating enzyme]-L-cysteine + [acceptor protein]-L-lysine = [E2 ubiquitin-conjugating enzyme]-L-cysteine + N(6)-ubiquitinyl-[acceptor protein]-L-lysine.. Its pathway is protein modification; protein ubiquitination. In terms of biological role, possesses E3 ubiquitin-protein ligase in vitro. This Oryza sativa subsp. japonica (Rice) protein is E3 ubiquitin-protein ligase Os03g0188200.